The chain runs to 95 residues: Acylphosphatase 2 (95 aa).

The 88-residue stretch at 6-93 (RVIVTVQGRV…PLPPGFEVRP (88 aa)) folds into the Acylphosphatase-like domain. Residues Arg21 and Asn39 contribute to the active site.

The protein belongs to the acylphosphatase family.

It carries out the reaction an acyl phosphate + H2O = a carboxylate + phosphate + H(+). The protein is Acylphosphatase 2 (acyP2) of Ralstonia nicotianae (strain ATCC BAA-1114 / GMI1000) (Ralstonia solanacearum).